Consider the following 779-residue polypeptide: LPS-assembly protein LptD (779 aa).

Positions M1 to A23 are cleaved as a signal peptide.

The protein belongs to the LptD family. In terms of assembly, component of the lipopolysaccharide transport and assembly complex. Interacts with LptE and LptA.

It is found in the cell outer membrane. In terms of biological role, together with LptE, is involved in the assembly of lipopolysaccharide (LPS) at the surface of the outer membrane. The chain is LPS-assembly protein LptD from Haemophilus ducreyi (strain 35000HP / ATCC 700724).